The following is a 449-amino-acid chain: Phosphoglucosamine mutase (449 aa).

Ser-102 acts as the Phosphoserine intermediate in catalysis. Ser-102, Asp-241, Asp-243, and Asp-245 together coordinate Mg(2+). The residue at position 102 (Ser-102) is a Phosphoserine.

The protein belongs to the phosphohexose mutase family. The cofactor is Mg(2+). Post-translationally, activated by phosphorylation.

It catalyses the reaction alpha-D-glucosamine 1-phosphate = D-glucosamine 6-phosphate. Functionally, catalyzes the conversion of glucosamine-6-phosphate to glucosamine-1-phosphate. This is Phosphoglucosamine mutase from Roseobacter denitrificans (strain ATCC 33942 / OCh 114) (Erythrobacter sp. (strain OCh 114)).